Consider the following 431-residue polypeptide: RNA-binding motif, single-stranded-interacting protein 3 (431 aa).

The interval Tyr28 to Leu53 is disordered. Over residues Ala31–Pro40 the composition is skewed to pro residues. RRM domains are found at residues Thr56 to Gln129 and Thr135 to Gly220. Disordered stretches follow at residues Gly220–Gly242 and Thr393–Pro431. Residues Ser401–Gln411 are compositionally biased toward low complexity.

Its subcellular location is the cytoplasm. In terms of biological role, binds poly(A) and poly(U) oligoribonucleotides. The polypeptide is RNA-binding motif, single-stranded-interacting protein 3 (Rbms3) (Mus musculus (Mouse)).